Reading from the N-terminus, the 479-residue chain is BURP domain-containing protein 4 (479 aa).

The N-terminal stretch at 1 to 46 is a signal peptide; the sequence is MVGKGNECAAARRRFSLRAAAASSSSSSFLPCLLLAAALSAGCCRA. The tract at residues 158-177 is disordered; sequence RADGPPKQPATFPASPNGEK. The BURP domain maps to 254 to 479; the sequence is LFLMKKLHPG…PQGYVLWLAN (226 aa). N-linked (GlcNAc...) asparagine glycosylation is present at Asn445.

In terms of tissue distribution, expressed in stamen.

This Oryza sativa subsp. japonica (Rice) protein is BURP domain-containing protein 4 (BURP4).